The primary structure comprises 112 residues: CENP-A recruiting complex protein mis19 (112 aa).

Component of the CENP-A recruiting complex composed of at least mis16, mis19, mis19 and mis20.

The protein localises to the chromosome. It is found in the centromere. Its subcellular location is the kinetochore. Its function is as follows. Component of the CENP-A recruiting complex that ensures the integrity of mitotic spindles through maintenance of kinetochore factors mis6/CENP-I and cnp1/CENP-A. Links mis16 and mis18 to recruit CENP-A through interacting with non-sense-mediated mRNA decay (NMD) factors and the SWI/SNF complex. Also links mis18 with the CCAN/mis6/ctf19 complex to promote CENP-A assembly. In Schizosaccharomyces pombe (strain 972 / ATCC 24843) (Fission yeast), this protein is CENP-A recruiting complex protein mis19.